Here is a 191-residue protein sequence, read N- to C-terminus: MKLVVGLGNPGPEYAATRHNIGFLVAQKFAQQMGVSLKRQAYQGIVGTGRADGQETMVLLPQTYMNRSGVSVVSACKSKGIAVEDVVVIHDEIDLPFGSIRIKVGGGHGGHNGLRSIVDLLGCRDFLRVRMGVGRPQGQVDVAKYVLGQFSSTEKSQLDNVLENSVKALEVLLQKGAQQAMNEFNNRVFLI.

Position 14 (Y14) interacts with tRNA. Catalysis depends on H19, which acts as the Proton acceptor. TRNA contacts are provided by Y64, N66, and N112.

It belongs to the PTH family. In terms of assembly, monomer.

The protein resides in the cytoplasm. It catalyses the reaction an N-acyl-L-alpha-aminoacyl-tRNA + H2O = an N-acyl-L-amino acid + a tRNA + H(+). Hydrolyzes ribosome-free peptidyl-tRNAs (with 1 or more amino acids incorporated), which drop off the ribosome during protein synthesis, or as a result of ribosome stalling. In terms of biological role, catalyzes the release of premature peptidyl moieties from peptidyl-tRNA molecules trapped in stalled 50S ribosomal subunits, and thus maintains levels of free tRNAs and 50S ribosomes. This chain is Peptidyl-tRNA hydrolase, found in Syntrophotalea carbinolica (strain DSM 2380 / NBRC 103641 / GraBd1) (Pelobacter carbinolicus).